The sequence spans 513 residues: Light-independent protochlorophyllide reductase subunit B (513 aa).

Aspartate 36 contacts [4Fe-4S] cluster. The active-site Proton donor is the aspartate 299. Position 434–435 (434–435) interacts with substrate; it reads GM.

This sequence belongs to the ChlB/BchB/BchZ family. As to quaternary structure, protochlorophyllide reductase is composed of three subunits; ChlL, ChlN and ChlB. Forms a heterotetramer of two ChlB and two ChlN subunits. It depends on [4Fe-4S] cluster as a cofactor.

The protein resides in the plastid. It is found in the chloroplast. It catalyses the reaction chlorophyllide a + oxidized 2[4Fe-4S]-[ferredoxin] + 2 ADP + 2 phosphate = protochlorophyllide a + reduced 2[4Fe-4S]-[ferredoxin] + 2 ATP + 2 H2O. Its pathway is porphyrin-containing compound metabolism; chlorophyll biosynthesis (light-independent). In terms of biological role, component of the dark-operative protochlorophyllide reductase (DPOR) that uses Mg-ATP and reduced ferredoxin to reduce ring D of protochlorophyllide (Pchlide) to form chlorophyllide a (Chlide). This reaction is light-independent. The NB-protein (ChlN-ChlB) is the catalytic component of the complex. The protein is Light-independent protochlorophyllide reductase subunit B of Anthoceros angustus (Hornwort).